Here is a 417-residue protein sequence, read N- to C-terminus: Phosphoglycerate kinase 1 (417 aa).

Ser-2 bears the N-acetylserine mark. Phosphoserine occurs at positions 2 and 4. The residue at position 6 (Lys-6) is an N6-succinyllysine. Lys-11 is subject to N6-acetyllysine. (2R)-3-phosphoglycerate is bound by residues Val-23, Asp-24, Phe-25, Asn-26, Gln-38, and Arg-39. Positions 38 to 43 are mitochondrial targeting region exposed following cis-trans isomerization by PIN1 and recognized by the TOM complex for mitochondrial translocation of the protein; that stretch reads QRIKAA. An N6-acetyllysine; alternate modification is found at Lys-48. Position 48 is an N6-succinyllysine; alternate (Lys-48). (2R)-3-phosphoglycerate-binding residues include Ser-62, His-63, Gly-65, and Arg-66. The residue at position 75 (Lys-75) is an N6-acetyllysine. Residue Tyr-76 is modified to Phosphotyrosine. N6-acetyllysine occurs at positions 86 and 91. Lys-97 carries the N6-acetyllysine; alternate modification. Position 97 is an N6-(2-hydroxyisobutyryl)lysine; alternate (Lys-97). Positions 122 and 123 each coordinate (2R)-3-phosphoglycerate. The residue at position 131 (Lys-131) is an N6-acetyllysine; alternate. At Lys-131 the chain carries N6-malonyllysine; alternate. N6-acetyllysine is present on Lys-146. (2R)-3-phosphoglycerate-binding residues include His-170 and Arg-171. The residue at position 191 (Lys-191) is an N6-succinyllysine. Tyr-196 carries the phosphotyrosine modification. Residue Lys-199 is modified to N6-acetyllysine. Ser-203 is subject to Phosphoserine. Gly-214 is an ADP binding site. Gly-214 lines the CDP pocket. AMP-binding residues include Ala-215 and Lys-216. Position 215 (Ala-215) interacts with ATP. Ala-215 is a binding site for Mg(2+). Lys-216 is modified (N6-(2-hydroxyisobutyryl)lysine). 2 residues coordinate Mg(2+): Ala-218 and Asp-219. Asp-219 lines the CDP pocket. An AMP-binding site is contributed by Lys-220. An ATP-binding site is contributed by Lys-220. N6-(2-hydroxyisobutyryl)lysine is present on Lys-220. Gly-238 lines the ADP pocket. Residue Gly-238 coordinates CDP. Gly-239 lines the AMP pocket. Residue Gly-239 coordinates ATP. N6-acetyllysine is present on residues Lys-267 and Lys-291. Gly-313 provides a ligand contact to AMP. ATP is bound at residue Gly-313. Lys-323 carries the N6-(2-hydroxyisobutyryl)lysine modification. The CDP site is built by Gly-338, Val-340, and Phe-343. An ADP-binding site is contributed by Phe-343. Glu-344 contributes to the AMP binding site. Glu-344 lines the ATP pocket. N6-acetyllysine is present on Lys-361. Residues Asp-375 and Thr-376 each coordinate ATP. Asp-375 serves as a coordination point for Mg(2+).

It belongs to the phosphoglycerate kinase family. In terms of assembly, monomer. Interacts with kinase MAPK1/ERK2; the interaction is direct, occurs under hypoxic conditions, and promotes its interaction with PIN1. Interacts with peptidyl-prolyl cis-trans isomerase PIN1; the interaction is direct, occurs under hypoxic conditions, and targets the protein to the mitochondrion by promoting interactions with the TOM complex. Interacts with mitochondrial circRNA mcPGK1 (via its 2nd stem-loop); the interaction is direct and targets the protein to the mitochondrion by promoting interactions with the TOM complex. Interacts with pyruvate dehydrogenase kinase PDK1; the interaction is direct, occurs under hypoxic conditions and leads to PDK1-mediated inhibition of pyruvate dehydrogenase complex activity. Mg(2+) serves as cofactor. Phosphorylated at Ser-203 by MAPK1/ERK2 under hypoxic conditions, which promotes its mitochondrial targeting. In terms of tissue distribution, testis, lung, brain, skeletal muscle, liver, intestine, and kidney (at protein level).

The protein resides in the cytoplasm. The protein localises to the cytosol. Its subcellular location is the mitochondrion matrix. The enzyme catalyses (2R)-3-phosphoglycerate + ATP = (2R)-3-phospho-glyceroyl phosphate + ADP. It carries out the reaction L-seryl-[protein] + ATP = O-phospho-L-seryl-[protein] + ADP + H(+). It functions in the pathway carbohydrate degradation; glycolysis; pyruvate from D-glyceraldehyde 3-phosphate: step 2/5. In terms of biological role, catalyzes one of the two ATP producing reactions in the glycolytic pathway via the reversible conversion of 1,3-diphosphoglycerate to 3-phosphoglycerate. Both L- and D- forms of purine and pyrimidine nucleotides can be used as substrates, but the activity is much lower on pyrimidines. In addition to its role as a glycolytic enzyme, it seems that PGK-1 acts as a polymerase alpha cofactor protein (primer recognition protein). Acts as a protein kinase when localized to the mitochondrion where it phosphorylates pyruvate dehydrogenase kinase PDK1 to inhibit pyruvate dehydrogenase complex activity and suppress the formation of acetyl-coenzyme A from pyruvate, and consequently inhibit oxidative phosphorylation and promote glycolysis. May play a role in sperm motility. The polypeptide is Phosphoglycerate kinase 1 (Pgk1) (Mus musculus (Mouse)).